The following is a 340-amino-acid chain: Protein RecA (340 aa).

65 to 72 (GPESGGKT) is an ATP binding site.

Belongs to the RecA family.

It localises to the cytoplasm. Its function is as follows. Can catalyze the hydrolysis of ATP in the presence of single-stranded DNA, the ATP-dependent uptake of single-stranded DNA by duplex DNA, and the ATP-dependent hybridization of homologous single-stranded DNAs. It interacts with LexA causing its activation and leading to its autocatalytic cleavage. The protein is Protein RecA of Thermus aquaticus.